A 128-amino-acid chain; its full sequence is MFS18 protein (128 aa).

Residues 1–25 form the signal peptide; sequence MARSSKMMVAARLLALALAVSTAEA. The tract at residues 26–79 is disordered; it reads RNIKTTTTEKKDDAVVQPQTFPPFDRLGGGASPAFGGLPGGSIPGSSIPGFSMP. Residues 52–68 are compositionally biased toward gly residues; that stretch reads LGGGASPAFGGLPGGSI. 11 repeat units span residues 64–67, 64–75, 69–72, 69–80, 74–77, 79–82, 81–92, 86–89, 91–94, 104–107, and 113–116. The interval 64–92 is 3 X approximate tandem repeats; it reads PGGSIPGSSIPGFSMPGSGSSLPGFSLPG. The tract at residues 64–116 is 8 X 4 AA approximate repeats; sequence PGGSIPGSSIPGFSMPGSGSSLPGFSLPGSGTMPLFGGGSPGFSGFGGMPGSP. Over residues 69-79 the composition is skewed to low complexity; sequence PGSSIPGFSMP. Over residues 99 to 113 the composition is skewed to gly residues; it reads FGGGSPGFSGFGGMP. The interval 99-128 is disordered; that stretch reads FGGGSPGFSGFGGMPGSPTAGSVPEHANKP.

Enhanced expression in male flowers. Accumulates in the glumes and in anther walls, paleas and lemmas of mature florets.

In Zea mays (Maize), this protein is MFS18 protein (MFS18).